A 114-amino-acid chain; its full sequence is UPF0102 protein HPG27_782 (114 aa).

This sequence belongs to the UPF0102 family.

The protein is UPF0102 protein HPG27_782 of Helicobacter pylori (strain G27).